A 209-amino-acid chain; its full sequence is Large ribosomal subunit protein uL3 (209 aa).

This sequence belongs to the universal ribosomal protein uL3 family. As to quaternary structure, part of the 50S ribosomal subunit. Forms a cluster with proteins L14 and L19.

In terms of biological role, one of the primary rRNA binding proteins, it binds directly near the 3'-end of the 23S rRNA, where it nucleates assembly of the 50S subunit. This Oceanobacillus iheyensis (strain DSM 14371 / CIP 107618 / JCM 11309 / KCTC 3954 / HTE831) protein is Large ribosomal subunit protein uL3.